The chain runs to 170 residues: Urease accessory protein UreE (170 aa).

The protein belongs to the UreE family.

It localises to the cytoplasm. Involved in urease metallocenter assembly. Binds nickel. Probably functions as a nickel donor during metallocenter assembly. The polypeptide is Urease accessory protein UreE (Helicobacter acinonychis (strain Sheeba)).